Here is a 560-residue protein sequence, read N- to C-terminus: Endogenous retrovirus group K member 18 Env polyprotein (560 aa).

The interval 355–375 is fusion peptide; sequence FIFTLIAVIMGLIAVTATAAV. The chain crosses the membrane as a helical span at residues 522–542; the sequence is IRSTMIINLILIVVCLFCLLL.

Belongs to the beta type-B retroviral envelope protein family. HERV class-II K(HML-2) env subfamily. The surface (SU) and transmembrane (TM) proteins form a heterodimer. SU and TM are attached by noncovalent interactions or by a labile interchain disulfide bond. In terms of processing, specific enzymatic cleavages in vivo yield the mature SU and TM proteins. Expressed at higher level in the thymus. Expressed at lower level in peripheral blood lymphocytes.

It localises to the cell membrane. The protein resides in the virion. Functionally, retroviral envelope proteins mediate receptor recognition and membrane fusion during early infection. Endogenous envelope proteins may have kept, lost or modified their original function during evolution. This envelope protein has superantigenic properties. Its function is as follows. SU mediates receptor recognition. In terms of biological role, TM anchors the envelope heterodimer to the viral membrane through one transmembrane domain. The other hydrophobic domain, called fusion peptide, mediates fusion of the viral membrane with the target cell membrane. In Homo sapiens (Human), this protein is Endogenous retrovirus group K member 18 Env polyprotein (ERVK-18).